Consider the following 231-residue polypeptide: Ribose-5-phosphate isomerase A (231 aa).

Residues 28 to 31 (TGST), 83 to 86 (DGAD), and 96 to 99 (KGGG) each bind substrate. The Proton acceptor role is filled by glutamate 105. A substrate-binding site is contributed by lysine 123.

Belongs to the ribose 5-phosphate isomerase family. In terms of assembly, homodimer.

The enzyme catalyses aldehydo-D-ribose 5-phosphate = D-ribulose 5-phosphate. Its pathway is carbohydrate degradation; pentose phosphate pathway; D-ribose 5-phosphate from D-ribulose 5-phosphate (non-oxidative stage): step 1/1. In terms of biological role, catalyzes the reversible conversion of ribose-5-phosphate to ribulose 5-phosphate. This is Ribose-5-phosphate isomerase A from Rhizobium meliloti (strain 1021) (Ensifer meliloti).